The sequence spans 701 residues: Polyribonucleotide nucleotidyltransferase (701 aa).

The Mg(2+) site is built by Asp-487 and Asp-493. The KH domain occupies 554-613 (PTMIAMKIDTDKIRDVIGKGGATIRAICEETKASIDIEDDGSIKIFGESKEAAEAARQRV). Residues 623–691 (GKIYIGKVER…NRGRIKLSIK (69 aa)) form the S1 motif domain.

Belongs to the polyribonucleotide nucleotidyltransferase family. As to quaternary structure, component of the RNA degradosome, which is a multiprotein complex involved in RNA processing and mRNA degradation. The cofactor is Mg(2+).

It localises to the cytoplasm. The catalysed reaction is RNA(n+1) + phosphate = RNA(n) + a ribonucleoside 5'-diphosphate. In terms of biological role, involved in mRNA degradation. Catalyzes the phosphorolysis of single-stranded polyribonucleotides processively in the 3'- to 5'-direction. In Pseudomonas syringae pv. syringae (strain B728a), this protein is Polyribonucleotide nucleotidyltransferase.